Reading from the N-terminus, the 91-residue chain is DNA-directed RNA polymerase subunit omega (91 aa).

The protein belongs to the RNA polymerase subunit omega family. As to quaternary structure, the RNAP catalytic core consists of 2 alpha, 1 beta, 1 beta' and 1 omega subunit. When a sigma factor is associated with the core the holoenzyme is formed, which can initiate transcription.

It carries out the reaction RNA(n) + a ribonucleoside 5'-triphosphate = RNA(n+1) + diphosphate. In terms of biological role, promotes RNA polymerase assembly. Latches the N- and C-terminal regions of the beta' subunit thereby facilitating its interaction with the beta and alpha subunits. The sequence is that of DNA-directed RNA polymerase subunit omega from Syntrophus aciditrophicus (strain SB).